We begin with the raw amino-acid sequence, 84 residues long: MANIKANEKSYRQNQKANLLTKGFKTSLKNQLKKTKASKDKKDVEQVYSLADKLAKNNRISKNKARRLKSRAARWSNSATAASR.

Basic residues predominate over residues 62–72 (KNKARRLKSRA). The tract at residues 62–84 (KNKARRLKSRAARWSNSATAASR) is disordered. Polar residues predominate over residues 75-84 (WSNSATAASR).

This sequence belongs to the bacterial ribosomal protein bS20 family.

Binds directly to 16S ribosomal RNA. The sequence is that of Small ribosomal subunit protein bS20 from Mycoplasmoides gallisepticum (strain R(low / passage 15 / clone 2)) (Mycoplasma gallisepticum).